Here is a 138-residue protein sequence, read N- to C-terminus: Phosphoribosyl-AMP cyclohydrolase (138 aa).

Asp-84 provides a ligand contact to Mg(2+). Cys-85 lines the Zn(2+) pocket. 2 residues coordinate Mg(2+): Asp-86 and Asp-88. Positions 102 and 109 each coordinate Zn(2+).

It belongs to the PRA-CH family. As to quaternary structure, homodimer. Mg(2+) is required as a cofactor. Zn(2+) serves as cofactor.

It is found in the cytoplasm. The catalysed reaction is 1-(5-phospho-beta-D-ribosyl)-5'-AMP + H2O = 1-(5-phospho-beta-D-ribosyl)-5-[(5-phospho-beta-D-ribosylamino)methylideneamino]imidazole-4-carboxamide. The protein operates within amino-acid biosynthesis; L-histidine biosynthesis; L-histidine from 5-phospho-alpha-D-ribose 1-diphosphate: step 3/9. Its function is as follows. Catalyzes the hydrolysis of the adenine ring of phosphoribosyl-AMP. In Burkholderia vietnamiensis (strain G4 / LMG 22486) (Burkholderia cepacia (strain R1808)), this protein is Phosphoribosyl-AMP cyclohydrolase.